The sequence spans 156 residues: Transcription factor MafK (156 aa).

A disordered region spans residues 1–21; sequence MTTNPKPNKALKVKEESGENA. The segment at 51–76 is basic motif; that stretch reads RLKQRRRTLKNRGYAASCRIKRVTQK. The bZIP domain maps to 51-114; that stretch reads RLKQRRRTLK…DALRSKYEAL (64 aa). Residues 79–93 form a leucine-zipper region; that stretch reads LERQRVELQQEVEKL.

Belongs to the bZIP family. Maf subfamily. In terms of assembly, homodimer or heterodimer.

It localises to the nucleus. Functionally, since they lack a putative transactivation domain, the small Mafs behave as transcriptional repressors when they dimerize among themselves. However, they act as transcriptional activators by dimerizing with other (usually larger) basic-zipper proteins and recruiting them to specific DNA-binding sites. Small Maf proteins heterodimerize with Fos and may act as competitive repressors of the NF-E2 transcription factor. In Gallus gallus (Chicken), this protein is Transcription factor MafK (MAFK).